A 377-amino-acid polypeptide reads, in one-letter code: D-alanine--D-alanine ligase (377 aa).

Residues 141-347 (KRILNQAGIR…YSELIDRLIQ (207 aa)) enclose the ATP-grasp domain. 171 to 226 (KEELGDLVFVKPAKQGSSVGIHKVDTEEEYETAMKDAFTYDYKVLVEAGIKNPREI) is an ATP binding site. Mg(2+) is bound by residues Asp-301, Glu-314, and Asn-316.

The protein belongs to the D-alanine--D-alanine ligase family. The cofactor is Mg(2+). It depends on Mn(2+) as a cofactor.

The protein localises to the cytoplasm. The enzyme catalyses 2 D-alanine + ATP = D-alanyl-D-alanine + ADP + phosphate + H(+). Its pathway is cell wall biogenesis; peptidoglycan biosynthesis. In terms of biological role, cell wall formation. This is D-alanine--D-alanine ligase from Limosilactobacillus fermentum (strain NBRC 3956 / LMG 18251) (Lactobacillus fermentum).